We begin with the raw amino-acid sequence, 184 residues long: MNGLILFCAVVFATAVCTYGSDAPCLRAGGRCQHDSITCSGRYRTGLCSGGVRRRCCVPSSSNSGSFSTGMVSQQCLRCICNVESGCRPIGCHWDVNSDSCGYFQIKRAYWIDCGSPGGDWQTCANNLACSSRCVQAYMARYHRRSGCSNSCESFARIHNGGPRGCRNSNTEGYWRRVQAQGCN.

A signal peptide spans 1–20 (MNGLILFCAVVFATAVCTYG). One can recognise an I-type lysozyme domain in the interval 69–184 (TGMVSQQCLR…WRRVQAQGCN (116 aa)). Intrachain disulfides connect cysteine 76–cysteine 152, cysteine 81–cysteine 87, cysteine 92–cysteine 101, cysteine 114–cysteine 134, cysteine 124–cysteine 130, and cysteine 148–cysteine 166. The active-site Proton donor is glutamate 84. The active-site Nucleophile is aspartate 95. 107–113 (KRAYWID) is a substrate binding site. Substrate-binding positions include tyrosine 138 and 159–161 (HNG).

As to expression, hemolymph, labial palps, non-vesiculated cells of mantle connective tissue, cells of interlamellar junctions and epithelia surrounding the water tubes of the gills.

Its subcellular location is the secreted. The enzyme catalyses Hydrolysis of (1-&gt;4)-beta-linkages between N-acetylmuramic acid and N-acetyl-D-glucosamine residues in a peptidoglycan and between N-acetyl-D-glucosamine residues in chitodextrins.. Has antibacterial activity against the Gram-positive bacteria L.garvieae, M.luteus and Enterococcus sp., and the Gram-negative bacteria E.coli and V.vulnificus. Weak antibacterial activity against the Gram-negative bacterium A.hydrophila. No antibacterial activity detected against the Gram-positive bacterium S.iniae or against the Gram-negative bacterium E.ictaluri. Shows some chitinase activity but no isopeptidase activity. This Crassostrea virginica (Eastern oyster) protein is Lysozyme 1.